The primary structure comprises 89 residues: MAKKSKIAKERKRQQMVEKYAELRRELKAKGDYEAIRKLPRDSSPTRLTGRCEVTGRPRGYMRQFKMSRIAFREYAHKGQIPGVKKSSW.

The protein belongs to the universal ribosomal protein uS14 family. As to quaternary structure, part of the 30S ribosomal subunit. Contacts proteins S3 and S10.

Functionally, binds 16S rRNA, required for the assembly of 30S particles and may also be responsible for determining the conformation of the 16S rRNA at the A site. In Oceanobacillus iheyensis (strain DSM 14371 / CIP 107618 / JCM 11309 / KCTC 3954 / HTE831), this protein is Small ribosomal subunit protein uS14A.